Reading from the N-terminus, the 659-residue chain is Centrosomal protein of 76 kDa (659 aa).

Phosphoserine occurs at positions 75 and 83.

This sequence belongs to the CEP76 family. Interacts with CCP110 and CEP97.

The protein localises to the cytoplasm. It localises to the cytoskeleton. Its subcellular location is the microtubule organizing center. The protein resides in the centrosome. It is found in the centriole. Functionally, centrosomal protein involved in regulation of centriole duplication. Required to limit centriole duplication to once per cell cycle by preventing centriole reduplication. The polypeptide is Centrosomal protein of 76 kDa (CEP76) (Homo sapiens (Human)).